The primary structure comprises 563 residues: Arginine--tRNA ligase (563 aa).

Positions 119 to 129 (ANPTGPLHVGR) match the 'HIGH' region motif.

Belongs to the class-I aminoacyl-tRNA synthetase family.

Its subcellular location is the cytoplasm. The catalysed reaction is tRNA(Arg) + L-arginine + ATP = L-arginyl-tRNA(Arg) + AMP + diphosphate. This chain is Arginine--tRNA ligase, found in Methanocella arvoryzae (strain DSM 22066 / NBRC 105507 / MRE50).